Here is a 599-residue protein sequence, read N- to C-terminus: Subtilisin-like protease 1 (599 aa).

Residues 1-20 (MRTVFIYACIISLVLRTIPA) form the signal peptide. The propeptide at 21–195 (HNDLMSKEKE…VESDELVGAD (175 aa)) is inhibition peptide. An N-linked (GlcNAc...) asparagine glycan is attached at N57. A coiled-coil region spans residues 74–101 (EDAPKEELNKIEMEKKKAEEEAKNSKKK). Ca(2+) contacts are provided by N123, T126, P128, and G183. The N-linked (GlcNAc...) asparagine glycan is linked to N227. D251 lines the Ca(2+) pocket. A Peptidase S8 domain is found at 257–574 (QWGLDLARLD…GGYIDILNAV (318 aa)). 2 disulfides stabilise this stretch: C283/C393 and C372/C389. D286 serves as the catalytic Charge relay system. D295, E306, D314, D315, D316, N318, I320, D322, and D323 together coordinate Ca(2+). A glycan (N-linked (GlcNAc...) asparagine) is linked at N331. H342 (charge relay system) is an active-site residue. Residue I353 participates in Ca(2+) binding. N-linked (GlcNAc...) asparagine glycosylation is present at N355. Residues N356, I358, and V360 each coordinate Ca(2+). N-linked (GlcNAc...) asparagine glycans are attached at residues N402 and N434. C435 and C448 are disulfide-bonded. S519 functions as the Charge relay system in the catalytic mechanism.

Belongs to the peptidase S8 family. Post-translationally, the N-terminal prodomain is cleaved.

The protein resides in the secreted. The protein localises to the parasitophorous vacuole lumen. It localises to the cytoplasmic vesicle. Its subcellular location is the secretory vesicle. The enzyme catalyses Hydrolysis of proteins with broad specificity for peptide bonds, and a preference for a large uncharged residue in P1. Hydrolyzes peptide amides.. Mediates the proteolytic maturation of serine protease SERA3. Mediates the proteolytic maturation of MSP1, and thereby may prime the parasite cell surface for invasion of fresh erythrocytes. Required for completion of the parasite pre-erythrocytic stages. Required for hepatic schizont development and merozoite formation. Required for the egress of the hepatic merozoites from the parasitophorous vacuole. Required for parasite infectivity during blood stages. Required for male gamete egress. The sequence is that of Subtilisin-like protease 1 from Plasmodium berghei (strain Anka).